The chain runs to 365 residues: Annexin B22 (365 aa).

Annexin repeat units lie at residues 34–105, 106–185, 211–283, and 287–358; these read FSAS…QLIV, DTPY…SLVQ, ELAE…AVLR, and DRPS…VLMG. Residues Met47, Gly49, Gly51, Thr52, Glu54, Asp91, Met119, Gly121, Gly123, Asp126, Lys169, Glu171, Thr172, Glu177, Asp273, Met300, Gly302, Leu303, Gly304, and Asp344 each contribute to the Ca(2+) site.

The protein belongs to the annexin family. Homodimer.

It localises to the tegument. It is found in the secreted. The protein localises to the extracellular exosome. Its subcellular location is the host cell. Functionally, involved in reproduction of the worm. Involved in host-parasite interaction. Delivered into the host cell by means of parasite exosomes. Binds to acidic phospholipid membranes in a calcium-dependent manner in vitro. Causes aggregation of liposomes in the presence of calcium, but not in its absence. Likely to promote membrane fusion. May provide structural integrity within the tegument. The sequence is that of Annexin B22 from Schistosoma mansoni (Blood fluke).